Consider the following 228-residue polypeptide: MLVHIPEVLSRDQVRHCRELMARADWVDGRITAGHQSAQVKRNLQLPEGTPEARELSELVHGALSRHPLFMSAALPKTIFPPLFNRYDADGEMNFGSHVDNAIRTVPGTGVRVRTDVSSTLFLSDPDEYDGGELVVEDTYGSHAAKLPAGDMVVYPGTSLHHVTKVTRGSRIASFFWTQSLIADVTRRAMMFDLDMSIIRLNADHPDHPSVLSLTGLYHNLLRQWAEV.

The 103-residue stretch at threonine 78–serine 180 folds into the Fe2OG dioxygenase domain. Residues histidine 98, aspartate 100, and histidine 161 each contribute to the Fe cation site. Arginine 171 serves as a coordination point for 2-oxoglutarate.

It depends on Fe(2+) as a cofactor. The cofactor is L-ascorbate.

In Rhodopseudomonas palustris (strain BisA53), this protein is PKHD-type hydroxylase RPE_4577.